Reading from the N-terminus, the 633-residue chain is 1-deoxy-D-xylulose-5-phosphate synthase (633 aa).

Residues histidine 74 and 115 to 117 (GHA) each bind thiamine diphosphate. Aspartate 146 contributes to the Mg(2+) binding site. Residues 147-148 (GA), asparagine 175, tyrosine 286, and glutamate 363 each bind thiamine diphosphate. Mg(2+) is bound at residue asparagine 175.

Belongs to the transketolase family. DXPS subfamily. As to quaternary structure, homodimer. It depends on Mg(2+) as a cofactor. Thiamine diphosphate serves as cofactor.

The catalysed reaction is D-glyceraldehyde 3-phosphate + pyruvate + H(+) = 1-deoxy-D-xylulose 5-phosphate + CO2. Its pathway is metabolic intermediate biosynthesis; 1-deoxy-D-xylulose 5-phosphate biosynthesis; 1-deoxy-D-xylulose 5-phosphate from D-glyceraldehyde 3-phosphate and pyruvate: step 1/1. In terms of biological role, catalyzes the acyloin condensation reaction between C atoms 2 and 3 of pyruvate and glyceraldehyde 3-phosphate to yield 1-deoxy-D-xylulose-5-phosphate (DXP). This chain is 1-deoxy-D-xylulose-5-phosphate synthase, found in Dehalococcoides mccartyi (strain ATCC BAA-2100 / JCM 16839 / KCTC 5957 / BAV1).